The primary structure comprises 507 residues: ATP synthase subunit alpha, chloroplastic (507 aa).

170–177 contacts ATP; it reads GDRQTGKT. Thr-257 carries the phosphothreonine modification.

The protein belongs to the ATPase alpha/beta chains family. In terms of assembly, F-type ATPases have 2 components, CF(1) - the catalytic core - and CF(0) - the membrane proton channel. CF(1) has five subunits: alpha(3), beta(3), gamma(1), delta(1), epsilon(1). CF(0) has four main subunits: a, b, b' and c.

It is found in the plastid. The protein localises to the chloroplast thylakoid membrane. It carries out the reaction ATP + H2O + 4 H(+)(in) = ADP + phosphate + 5 H(+)(out). Functionally, produces ATP from ADP in the presence of a proton gradient across the membrane. The alpha chain is a regulatory subunit. This Aethionema grandiflorum (Persian stone-cress) protein is ATP synthase subunit alpha, chloroplastic.